Consider the following 457-residue polypeptide: Probable cytosolic Fe-S cluster assembly factor oxy-4 (457 aa).

Cysteine 25 contributes to the [4Fe-4S] cluster binding site. Residues 38–59 (KEESQVNIRTKKPKDKESSKTE) are disordered. Positions 71, 74, 77, 176, 232, 380, and 384 each coordinate [4Fe-4S] cluster.

This sequence belongs to the NARF family.

Component of the cytosolic iron-sulfur (Fe/S) protein assembly machinery. Required for maturation of extramitochondrial Fe/S proteins. This is Probable cytosolic Fe-S cluster assembly factor oxy-4 (oxy-4) from Caenorhabditis elegans.